Consider the following 149-residue polypeptide: Transthyretin (149 aa).

Residues 1–20 (MAFHSLLLLCLAGLAFVSET) form the signal peptide. A Sulfocysteine modification is found at cysteine 32. Position 37 (lysine 37) interacts with L-thyroxine. Glutamate 64 carries the post-translational modification 4-carboxyglutamate. Positions 76 and 139 each coordinate L-thyroxine.

This sequence belongs to the transthyretin family. As to quaternary structure, homotetramer. Dimer of dimers. In the homotetramer, subunits assemble around a central channel that can accommodate two ligand molecules. Interacts with RBP4. Post-translationally, sulfonation of the reactive cysteine Cys-32 enhances the stability of the native conformation of TTR, avoiding misassembly of the protein leading to amyloid formation.

It localises to the secreted. Its function is as follows. Thyroid hormone-binding protein. Probably transports thyroxine from the bloodstream to the brain. The protein is Transthyretin (TTR) of Notamacropus eugenii (Tammar wallaby).